Reading from the N-terminus, the 255-residue chain is 5-oxoprolinase subunit A (255 aa).

Belongs to the LamB/PxpA family. In terms of assembly, forms a complex composed of PxpA, PxpB and PxpC.

It carries out the reaction 5-oxo-L-proline + ATP + 2 H2O = L-glutamate + ADP + phosphate + H(+). Functionally, catalyzes the cleavage of 5-oxoproline to form L-glutamate coupled to the hydrolysis of ATP to ADP and inorganic phosphate. The polypeptide is 5-oxoprolinase subunit A (Clostridium beijerinckii (strain ATCC 51743 / NCIMB 8052) (Clostridium acetobutylicum)).